The primary structure comprises 198 residues: DnaJ homolog subfamily C member 12 (198 aa).

Methionine 1 carries the N-acetylmethionine modification. The J domain occupies 14 to 79 (DYYTLLGCDE…ESRARYDHWR (66 aa)). Residues 121 to 183 (TNTAQNKERS…CGHLHFRWSG (63 aa)) form a disordered region. Positions 126–156 (NKERSEQRETKQGDPDSTPEKMMQKESESPE) are enriched in basic and acidic residues. Phosphoserine is present on residues serine 160, serine 166, and serine 182.

In terms of assembly, interacts with HSPA8. Interacts with TPH1. Interacts with TPH2.

The protein resides in the cytoplasm. Functionally, probable co-chaperone that participates in the proper folding of biopterin-dependent aromatic amino acid hydroxylases, which include phenylalanine-4-hydroxylase (PAH), tyrosine 3-monooxygenase (TH) and peripheral and neuronal tryptophan hydroxylases (TPH1 and TPH2). The sequence is that of DnaJ homolog subfamily C member 12 (Dnajc12) from Rattus norvegicus (Rat).